The following is a 766-amino-acid chain: Phosphoribosylformylglycinamidine synthase subunit PurL (766 aa).

His46 is a catalytic residue. Positions 49 and 88 each coordinate ATP. Glu90 provides a ligand contact to Mg(2+). Residues 91–94 (SHNH) and Arg113 each bind substrate. Residue His92 is the Proton acceptor of the active site. Mg(2+) is bound at residue Asp114. Gln237 lines the substrate pocket. Asp265 contacts Mg(2+). 309–311 (ESQ) is a binding site for substrate. ATP contacts are provided by Asp520 and Gly557. Residue Asn558 coordinates Mg(2+). Ser560 contributes to the substrate binding site.

This sequence belongs to the FGAMS family. As to quaternary structure, monomer. Part of the FGAM synthase complex composed of 1 PurL, 1 PurQ and 2 PurS subunits.

The protein localises to the cytoplasm. It catalyses the reaction N(2)-formyl-N(1)-(5-phospho-beta-D-ribosyl)glycinamide + L-glutamine + ATP + H2O = 2-formamido-N(1)-(5-O-phospho-beta-D-ribosyl)acetamidine + L-glutamate + ADP + phosphate + H(+). Its pathway is purine metabolism; IMP biosynthesis via de novo pathway; 5-amino-1-(5-phospho-D-ribosyl)imidazole from N(2)-formyl-N(1)-(5-phospho-D-ribosyl)glycinamide: step 1/2. Functionally, part of the phosphoribosylformylglycinamidine synthase complex involved in the purines biosynthetic pathway. Catalyzes the ATP-dependent conversion of formylglycinamide ribonucleotide (FGAR) and glutamine to yield formylglycinamidine ribonucleotide (FGAM) and glutamate. The FGAM synthase complex is composed of three subunits. PurQ produces an ammonia molecule by converting glutamine to glutamate. PurL transfers the ammonia molecule to FGAR to form FGAM in an ATP-dependent manner. PurS interacts with PurQ and PurL and is thought to assist in the transfer of the ammonia molecule from PurQ to PurL. This is Phosphoribosylformylglycinamidine synthase subunit PurL from Synechococcus sp. (strain JA-3-3Ab) (Cyanobacteria bacterium Yellowstone A-Prime).